A 469-amino-acid chain; its full sequence is Ribulose bisphosphate carboxylase large chain (469 aa).

At lysine 5 the chain carries N6,N6,N6-trimethyllysine. Substrate is bound by residues asparagine 114 and threonine 164. The Proton acceptor role is filled by lysine 166. Lysine 168 serves as a coordination point for substrate. Mg(2+) is bound by residues lysine 192, aspartate 194, and glutamate 195. Lysine 192 carries the post-translational modification N6-carboxylysine. Histidine 285 functions as the Proton acceptor in the catalytic mechanism. Positions 286, 318, and 370 each coordinate substrate.

It belongs to the RuBisCO large chain family. Type I subfamily. Heterohexadecamer of 8 large chains and 8 small chains; disulfide-linked. The disulfide link is formed within the large subunit homodimers. The cofactor is Mg(2+). Post-translationally, the disulfide bond which can form in the large chain dimeric partners within the hexadecamer appears to be associated with oxidative stress and protein turnover.

It localises to the plastid. It is found in the chloroplast. The enzyme catalyses 2 (2R)-3-phosphoglycerate + 2 H(+) = D-ribulose 1,5-bisphosphate + CO2 + H2O. It carries out the reaction D-ribulose 1,5-bisphosphate + O2 = 2-phosphoglycolate + (2R)-3-phosphoglycerate + 2 H(+). Functionally, ruBisCO catalyzes two reactions: the carboxylation of D-ribulose 1,5-bisphosphate, the primary event in carbon dioxide fixation, as well as the oxidative fragmentation of the pentose substrate in the photorespiration process. Both reactions occur simultaneously and in competition at the same active site. The protein is Ribulose bisphosphate carboxylase large chain of Nicandra physalodes (Apple-of-Peru).